The sequence spans 309 residues: Taste receptor type 2 member 31 (309 aa).

Residues 1-2 (MI) are Extracellular-facing. A helical transmembrane segment spans residues 3-23 (TFLPTIFSILVVVIFVIGNFG). At 24–55 (NGFIALVNSIEWVKRQKISFADQILTALAVSR) the chain is on the cytoplasmic side. A helical transmembrane segment spans residues 56 to 76 (VGLLWALLLNWYSTVFNPAFY). The Extracellular portion of the chain corresponds to 77–100 (SVGVRTTVYDVWTVTGHFSNWLAT). A helical transmembrane segment spans residues 101 to 121 (SLSIFYLLKIANFSNLIFLHL). Topologically, residues 122 to 126 (KRRVK) are cytoplasmic. The chain crosses the membrane as a helical span at residues 127 to 147 (SVILVMLLGPLLFLACQLFVI). At 148–181 (NMKEILRTKEYEGNMTWKIKLRSAMYLSDATITT) the chain is on the extracellular side. Asn161 is a glycosylation site (N-linked (GlcNAc...) asparagine). The chain crosses the membrane as a helical span at residues 182-202 (LANLVPFTLTLLSFLLLICSL). The Cytoplasmic portion of the chain corresponds to 203–229 (CKHLNKMQLHGKGSQDPSTKVHIKVLQ). The chain crosses the membrane as a helical span at residues 230–250 (TVISFLLLCAIYFLSIMISVW). At 251–259 (SFGSLENKP) the chain is on the extracellular side. Residues 260–280 (VFMFCKAIRFSYPSIHPFILI) traverse the membrane as a helical segment. The Cytoplasmic portion of the chain corresponds to 281–309 (WGNKKLKQTFLSVLRQVRYWVKGEKPSSP).

It belongs to the G-protein coupled receptor T2R family.

The protein resides in the membrane. Functionally, receptor that may play a role in the perception of bitterness and is gustducin-linked. May play a role in sensing the chemical composition of the gastrointestinal content. The activity of this receptor may stimulate alpha gustducin, mediate PLC-beta-2 activation and lead to the gating of TRPM5. This chain is Taste receptor type 2 member 31 (TAS2R31), found in Pongo pygmaeus (Bornean orangutan).